Here is a 124-residue protein sequence, read N- to C-terminus: Small ribosomal subunit protein uS12 (124 aa).

Position 89 is a 3-methylthioaspartic acid (Asp-89).

Belongs to the universal ribosomal protein uS12 family. In terms of assembly, part of the 30S ribosomal subunit. Contacts proteins S8 and S17. May interact with IF1 in the 30S initiation complex.

With S4 and S5 plays an important role in translational accuracy. In terms of biological role, interacts with and stabilizes bases of the 16S rRNA that are involved in tRNA selection in the A site and with the mRNA backbone. Located at the interface of the 30S and 50S subunits, it traverses the body of the 30S subunit contacting proteins on the other side and probably holding the rRNA structure together. The combined cluster of proteins S8, S12 and S17 appears to hold together the shoulder and platform of the 30S subunit. In Arthrobacter sp. (strain FB24), this protein is Small ribosomal subunit protein uS12.